Reading from the N-terminus, the 448-residue chain is UDP-N-acetylmuramoylalanine--D-glutamate ligase (448 aa).

112-118 provides a ligand contact to ATP; that stretch reads GSNAKST.

It belongs to the MurCDEF family.

It is found in the cytoplasm. The enzyme catalyses UDP-N-acetyl-alpha-D-muramoyl-L-alanine + D-glutamate + ATP = UDP-N-acetyl-alpha-D-muramoyl-L-alanyl-D-glutamate + ADP + phosphate + H(+). Its pathway is cell wall biogenesis; peptidoglycan biosynthesis. In terms of biological role, cell wall formation. Catalyzes the addition of glutamate to the nucleotide precursor UDP-N-acetylmuramoyl-L-alanine (UMA). In Acinetobacter baylyi (strain ATCC 33305 / BD413 / ADP1), this protein is UDP-N-acetylmuramoylalanine--D-glutamate ligase.